The sequence spans 85 residues: High-potential iron-sulfur protein (85 aa).

Residues Cys43, Cys46, Cys63, and Cys77 each contribute to the [4Fe-4S] cluster site.

Belongs to the high-potential iron-sulfur protein (HiPIP) family. In terms of assembly, homodimer.

The protein localises to the periplasm. Functionally, specific class of high-redox-potential 4Fe-4S ferredoxins. Functions in anaerobic electron transport in most purple and in some other photosynthetic bacteria and in at least one genus (Paracoccus) of halophilic, denitrifying bacteria. The protein is High-potential iron-sulfur protein of Allochromatium warmingii (Chromatium warmingii).